We begin with the raw amino-acid sequence, 635 residues long: 5-aminolevulinate synthase, non-specific, mitochondrial (635 aa).

Residues 1–56 (MEAVVRRCPFLARVSQAFLQKAGPSLLFYAQHCPKMMEAAPPAAARGLATSASRGQ) constitute a mitochondrion transit peptide. Low complexity predominate over residues 44-66 (AARGLATSASRGQQVEETPAAQP). The disordered stretch occupies residues 44–94 (AARGLATSASRGQQVEETPAAQPEAKKAKEVAQQNTDGSQPPAGHPPAAAV). Positions 212, 329, and 348 each coordinate substrate. The pyridoxal 5'-phosphate site is built by Ser-381, His-409, and Thr-437. Residue Lys-440 is part of the active site. Lys-440 is subject to N6-(pyridoxal phosphate)lysine. Pyridoxal 5'-phosphate-binding residues include Thr-469 and Thr-470. Thr-557 is a binding site for substrate.

This sequence belongs to the class-II pyridoxal-phosphate-dependent aminotransferase family. In terms of assembly, homodimer. It depends on pyridoxal 5'-phosphate as a cofactor. As to expression, ubiquitous.

It is found in the mitochondrion inner membrane. It carries out the reaction succinyl-CoA + glycine + H(+) = 5-aminolevulinate + CO2 + CoA. Its pathway is porphyrin-containing compound metabolism; protoporphyrin-IX biosynthesis; 5-aminolevulinate from glycine: step 1/1. Catalyzes the pyridoxal 5'-phosphate (PLP)-dependent condensation of succinyl-CoA and glycine to form aminolevulinic acid (ALA), with CoA and CO2 as by-products. The polypeptide is 5-aminolevulinate synthase, non-specific, mitochondrial (ALAS1) (Gallus gallus (Chicken)).